The following is a 205-amino-acid chain: High frequency lysogenization protein HflD homolog (205 aa).

This sequence belongs to the HflD family.

It localises to the cytoplasm. Its subcellular location is the cell inner membrane. This Vibrio campbellii (strain ATCC BAA-1116) protein is High frequency lysogenization protein HflD homolog.